The primary structure comprises 68 residues: ATP synthase subunit c (68 aa).

The next 2 helical transmembrane spans lie at 5–25 (AAAI…GMIV) and 47–67 (FIGV…AFMV).

The protein belongs to the ATPase C chain family. As to quaternary structure, F-type ATPases have 2 components, F(1) - the catalytic core - and F(0) - the membrane proton channel. F(1) has five subunits: alpha(3), beta(3), gamma(1), delta(1), epsilon(1). F(0) has three main subunits: a(1), b(2) and c(10-14). The alpha and beta chains form an alternating ring which encloses part of the gamma chain. F(1) is attached to F(0) by a central stalk formed by the gamma and epsilon chains, while a peripheral stalk is formed by the delta and b chains.

It is found in the cell membrane. F(1)F(0) ATP synthase produces ATP from ADP in the presence of a proton or sodium gradient. F-type ATPases consist of two structural domains, F(1) containing the extramembraneous catalytic core and F(0) containing the membrane proton channel, linked together by a central stalk and a peripheral stalk. During catalysis, ATP synthesis in the catalytic domain of F(1) is coupled via a rotary mechanism of the central stalk subunits to proton translocation. Functionally, key component of the F(0) channel; it plays a direct role in translocation across the membrane. A homomeric c-ring of between 10-14 subunits forms the central stalk rotor element with the F(1) delta and epsilon subunits. The chain is ATP synthase subunit c from Oceanobacillus iheyensis (strain DSM 14371 / CIP 107618 / JCM 11309 / KCTC 3954 / HTE831).